We begin with the raw amino-acid sequence, 215 residues long: Outer-membrane lipoprotein carrier protein (215 aa).

Positions M1 to A24 are cleaved as a signal peptide.

This sequence belongs to the LolA family. As to quaternary structure, monomer.

The protein localises to the periplasm. Participates in the translocation of lipoproteins from the inner membrane to the outer membrane. Only forms a complex with a lipoprotein if the residue after the N-terminal Cys is not an aspartate (The Asp acts as a targeting signal to indicate that the lipoprotein should stay in the inner membrane). In Ralstonia nicotianae (strain ATCC BAA-1114 / GMI1000) (Ralstonia solanacearum), this protein is Outer-membrane lipoprotein carrier protein.